The primary structure comprises 666 residues: Adenylylsulfate reductase subunit alpha (666 aa).

FAD is bound by residues 32–35 (GGMG), 60–61 (DK), 67–69 (SGA), Asn78, Ile193, Ser259, Ser417, 461–462 (AD), and Ser472.

This sequence belongs to the FAD-dependent oxidoreductase 2 family. In terms of assembly, heterodimer composed of AprA and AprB. The heterodimers can dimerize to form heterotetramers. Requires FAD as cofactor.

It localises to the cytoplasm. The enzyme catalyses sulfite + A + AMP + 2 H(+) = adenosine 5'-phosphosulfate + AH2. Functionally, catalytic subunit of the adenylylsulfate reductase which catalyzes reversibly the reduction of adenosine 5'-phosphosulfate (APS) to sulfite and AMP during dissimilatory sulfate reduction. The protein is Adenylylsulfate reductase subunit alpha of Megalodesulfovibrio gigas (strain ATCC 19364 / DSM 1382 / NCIMB 9332 / VKM B-1759) (Desulfovibrio gigas).